Reading from the N-terminus, the 389-residue chain is MLLALAQWLQNDASFLRVFSYLTFRAVMATITALLIGLVCGPAVIRKLTAMKVGQAVRKDGPQTHLVKSGTPTMGGVLILLGIAVATLLWADLTNRFIWIVMLVTFGFGVIGWVDDYRKVVYKDPRGMSSREKYFWQSVIGLFAAVYLAFSVSEASNVRVFDLFMAWVRSGLSMGLPPHADLMLPFVKSISYPLGVWGFIVLTYLVIVGASNAVNLTDGLDGLVIMPVVLVGASLGVFAYVMGSSVYSKYLLFPHIAGAGELLIFCSAMGGAGLAFLWFNTHPAQMFMGDVGALALGGALGTVAVIVRQEIVLFIMGGIFVAETLSVMLQVTWFKFTKRRFGEGRRLFKMAPLHHHFELSGWKETQVVVRFWIITLMLCLFGLSTLKLR.

10 helical membrane passes run Arg25–Ile45, Thr73–Leu93, Phe97–Tyr117, Phe135–Ala155, Ile190–Ala210, Gly222–Met242, Ala259–Phe279, Phe287–Val307, Ile311–Val331, and Gln366–Leu386.

The protein belongs to the glycosyltransferase 4 family. MraY subfamily. Requires Mg(2+) as cofactor.

Its subcellular location is the cell inner membrane. The catalysed reaction is UDP-N-acetyl-alpha-D-muramoyl-L-alanyl-gamma-D-glutamyl-meso-2,6-diaminopimeloyl-D-alanyl-D-alanine + di-trans,octa-cis-undecaprenyl phosphate = di-trans,octa-cis-undecaprenyl diphospho-N-acetyl-alpha-D-muramoyl-L-alanyl-D-glutamyl-meso-2,6-diaminopimeloyl-D-alanyl-D-alanine + UMP. It functions in the pathway cell wall biogenesis; peptidoglycan biosynthesis. Functionally, catalyzes the initial step of the lipid cycle reactions in the biosynthesis of the cell wall peptidoglycan: transfers peptidoglycan precursor phospho-MurNAc-pentapeptide from UDP-MurNAc-pentapeptide onto the lipid carrier undecaprenyl phosphate, yielding undecaprenyl-pyrophosphoryl-MurNAc-pentapeptide, known as lipid I. The polypeptide is Phospho-N-acetylmuramoyl-pentapeptide-transferase (Paraburkholderia phytofirmans (strain DSM 17436 / LMG 22146 / PsJN) (Burkholderia phytofirmans)).